The chain runs to 519 residues: Membrane protein insertase YidC (519 aa).

Helical transmembrane passes span 6–26 (ILFVTLSAFTVFIWYFFFAQP), 298–318 (VDFGFFGFLGKIAFSILVFFY), 324–344 (YGWAIIMLTTIIQILVLPLTL), 390–410 (LGGCLPMLLQLPIFWAFFTML), 434–454 (FMQFGSFNLNLLPLMMGIGMF), and 471–491 (IMYIMPVIFTFMFWSFPSGLV).

It belongs to the OXA1/ALB3/YidC family. Type 1 subfamily. In terms of assembly, interacts with the Sec translocase complex via SecD. Specifically interacts with transmembrane segments of nascent integral membrane proteins during membrane integration.

It is found in the cell inner membrane. Its function is as follows. Required for the insertion and/or proper folding and/or complex formation of integral membrane proteins into the membrane. Involved in integration of membrane proteins that insert both dependently and independently of the Sec translocase complex, as well as at least some lipoproteins. Aids folding of multispanning membrane proteins. The polypeptide is Membrane protein insertase YidC (Endomicrobium trichonymphae).